A 215-amino-acid polypeptide reads, in one-letter code: Cytochrome b6 (215 aa).

The helical transmembrane segment at 32–52 (IFYCIGGITFTCFIMQVASGF) threads the bilayer. A heme c-binding site is contributed by C35. H86 and H100 together coordinate heme b. Helical transmembrane passes span 90-110 (ASMM…TGGF), 116-136 (LTWV…VTGY), and 186-206 (LHTF…FLMI). Heme b contacts are provided by H187 and H202.

Belongs to the cytochrome b family. PetB subfamily. As to quaternary structure, the 4 large subunits of the cytochrome b6-f complex are cytochrome b6, subunit IV (17 kDa polypeptide, PetD), cytochrome f and the Rieske protein, while the 4 small subunits are PetG, PetL, PetM and PetN. The complex functions as a dimer. Heme b is required as a cofactor. It depends on heme c as a cofactor.

It is found in the plastid. Its subcellular location is the chloroplast thylakoid membrane. Its function is as follows. Component of the cytochrome b6-f complex, which mediates electron transfer between photosystem II (PSII) and photosystem I (PSI), cyclic electron flow around PSI, and state transitions. The chain is Cytochrome b6 from Mesostigma viride (Green alga).